A 98-amino-acid chain; its full sequence is Ferredoxin-like protein (98 aa).

To ferredoxins from P.putida and C.tartarivorum, ferredoxin I from A.vinelandii, ferredoxin II from D.desulfuricans.

Could be a 3Fe-4S cluster-containing protein. The polypeptide is Ferredoxin-like protein (fixX) (Rhizobium leguminosarum bv. trifolii).